The primary structure comprises 249 residues: Type I iodothyronine deiodinase (249 aa).

Residues 1–12 lie on the Extracellular side of the membrane; sequence MGLPRPGLWLKR. A helical; Signal-anchor for type III membrane protein transmembrane segment spans residues 13-33; sequence LWVLVQVAVEVAVGKVLMTLF. Over 34 to 249 the chain is Cytoplasmic; that stretch reads PERVKQNILA…VRAVLEELHS (216 aa). The active site involves selenocysteine 126. Position 126 (selenocysteine 126) is a non-standard amino acid, selenocysteine.

It belongs to the iodothyronine deiodinase family. In terms of assembly, predominantly monomer. Can form homodimers but homodimerization is not essential for enzyme activity.

The protein localises to the cell membrane. The protein resides in the endoplasmic reticulum membrane. It is found in the basolateral cell membrane. The enzyme catalyses 3,3',5-triiodo-L-thyronine + iodide + A + H(+) = L-thyroxine + AH2. It catalyses the reaction 3,3',5'-triiodo-L-thyronine + iodide + A + H(+) = L-thyroxine + AH2. It carries out the reaction 3,3'-diiodo-L-thyronine + iodide + A + H(+) = 3,3',5'-triiodo-L-thyronine + AH2. The catalysed reaction is 3,3'-diiodo-L-thyronine + iodide + A + H(+) = 3,3',5-triiodo-L-thyronine + AH2. The enzyme catalyses 3'-iodo-L-thyronine + iodide + A + H(+) = 3',5'-diiodo-L-thyronine + AH2. It catalyses the reaction 3-iodo-L-thyronine + iodide + A + H(+) = 3,5-diiodo-L-thyronine + AH2. It carries out the reaction 3-iodo-L-thyronine + iodide + A + H(+) = 3,3'-diiodo-L-thyronine + AH2. The catalysed reaction is 3,3'-diiodothyronamine + iodide + A + H(+) = 3,3',5'-triiodothyronamine + AH2. The enzyme catalyses 3'-iodothyronamine + iodide + A + H(+) = 3',5'-diiodothyronamine + AH2. It catalyses the reaction 3-iodothyronamine + iodide + A + H(+) = 3,3'-diiodothyronamine + AH2. It carries out the reaction 3,3'-diiodothyronamine + iodide + A + H(+) = 3,3',5-triiodothyronamine + AH2. The catalysed reaction is 3-iodothyronamine + iodide + A + H(+) = 3,5-diiodothyronamine + AH2. The enzyme catalyses 3,3'-diiodo-L-thyronine sulfate + iodide + A + H(+) = 3,3',5'-triiodo-L-thyronine sulfate + AH2. It catalyses the reaction 3,3',5'-triiodo-L-thyronine sulfate + iodide + A + H(+) = L-thyroxine sulfate + AH2. It carries out the reaction 3,3'-diiodo-L-thyronine sulfate + iodide + A + H(+) = 3,3',5-triiodo-L-thyronine sulfate + AH2. In terms of biological role, plays a crucial role in the metabolism of thyroid hormones (TH) and has specific roles in TH activation and inactivation by deiodination. Catalyzes the deiodination of L-thyroxine (T4) to 3,5,3'-triiodothyronine (T3) via outer-ring deiodination (ORD) and of T4 to 3,3',5'-triiodothyronine (rT3) via inner-ring deiodination (IRD). Catalyzes the deiodiantion of rT3 to 3,3'-diiodothyronine (3,3'-T2) and 3',5'-diiodothyronine (3',5'-T2) to 3'-monoiodothyronine (3'-T1) via ORD. Catalyzes the deiodination of T3 to 3,3'-T2, 3,5-diiodothyronine (3,5-T2) to 3-monoiodothyronine (3-T1) and 3,3'-T2 to 3-T1 via IRD. Catalyzes the phenolic ring deiodinations of 3,3',5'-triiodothyronamine, 3',5'-diiodothyronamine and 3,3'-diiodothyronamine as well as tyrosyl ring deiodinations of 3,5,3'-triiodothyronamine and 3,5-diiodothyronamine. Catalyzes the deiodination of L-thyroxine sulfate and 3,3',5-triiodo-L-thyronine sulfate via IRD and of 3,3',5'-triiodo-L-thyronine sulfate via ORD. The sequence is that of Type I iodothyronine deiodinase (DIO1) from Oryctolagus cuniculus (Rabbit).